Here is a 345-residue protein sequence, read N- to C-terminus: Metal-dependent phosphohydrolase cns2 (345 aa).

An HD domain is found at 70-171; sequence RLEHSVGAFI…QLCADRLDYA (102 aa).

In terms of assembly, interacts with cns1.

The protein localises to the lipid droplet. It functions in the pathway secondary metabolite biosynthesis. Its function is as follows. Metal-dependent phosphohydrolase; part of the gene cluster that mediates the biosynthesis of cordycepin (COR) and pentostatin (PTN), two adenosine analogs with related bioactivity profiles as both mimic adenosine and can inhibit some of the processes that are adenosine dependent. Within the pathway, cns2 catalyzes dephosphorylation of 3'-AMP to produce 2'-carbonyl-3'-deoxyadenosine (2'-C-3'-dA). The first step of cordycepin biosynthesis involves hydroxyl phosphorylation of the 3'-OH position on adenosine to produce adenosine-3'-monophosphate (3'-AMP), catalyzed by kinase activity of cns3. Next, 3'-AMP is dephosphorylated to 2'-carbonyl-3'-deoxyadenosine by cns2, which is finally converted to cordycepin (3'-deoxyadenosine) by the oxidoreductase cns1. This is Metal-dependent phosphohydrolase cns2 from Cordyceps militaris (strain CM01) (Caterpillar fungus).